Consider the following 202-residue polypeptide: Nucleoside triphosphate pyrophosphatase (202 aa).

Asp79 functions as the Proton acceptor in the catalytic mechanism.

The protein belongs to the Maf family. It depends on a divalent metal cation as a cofactor.

The protein localises to the cytoplasm. The enzyme catalyses a ribonucleoside 5'-triphosphate + H2O = a ribonucleoside 5'-phosphate + diphosphate + H(+). It catalyses the reaction a 2'-deoxyribonucleoside 5'-triphosphate + H2O = a 2'-deoxyribonucleoside 5'-phosphate + diphosphate + H(+). Its function is as follows. Nucleoside triphosphate pyrophosphatase. May have a dual role in cell division arrest and in preventing the incorporation of modified nucleotides into cellular nucleic acids. The protein is Nucleoside triphosphate pyrophosphatase of Nitrobacter hamburgensis (strain DSM 10229 / NCIMB 13809 / X14).